The primary structure comprises 188 residues: ADP-ribosylation factor J (188 aa).

Residues 34–40 (DGAGKST), 75–79 (DVGGQ), and 134–137 (NKQD) contribute to the GTP site.

The protein belongs to the small GTPase superfamily. Arf family.

It is found in the golgi apparatus. Its function is as follows. GTP-binding protein that may be involved in protein trafficking. May modulate vesicle budding and uncoating within the Golgi apparatus. This Dictyostelium discoideum (Social amoeba) protein is ADP-ribosylation factor J (arrJ).